Consider the following 358-residue polypeptide: Metacaspase-3 (358 aa).

The important for catalytic activity stretch occupies residues 1–84; it reads MGFDFGCLLK…APTHVSGTFR (84 aa). Catalysis depends on residues histidine 168 and cysteine 223.

Belongs to the peptidase C14B family. In terms of processing, in epimastigotes, the unprocessed enzyme appears to be the main form. Auto-processing is dispensable for catalytic activity towards small oligopeptide substrates.

The protein resides in the cytoplasm. It is found in the nucleus. Activated by Ca(2+). In terms of biological role, cysteine protease that cleaves specifically after arginine or lysine residues. In epimastigotes, may play a role in cell cycle G1/S transition. The sequence is that of Metacaspase-3 from Trypanosoma cruzi (strain CL Brener).